The sequence spans 469 residues: ATP-dependent protease ATPase subunit HslU (469 aa).

ATP is bound by residues I21, 63 to 68 (GVGKTE), D282, E347, and R419.

It belongs to the ClpX chaperone family. HslU subfamily. A double ring-shaped homohexamer of HslV is capped on each side by a ring-shaped HslU homohexamer. The assembly of the HslU/HslV complex is dependent on binding of ATP.

The protein localises to the cytoplasm. ATPase subunit of a proteasome-like degradation complex; this subunit has chaperone activity. The binding of ATP and its subsequent hydrolysis by HslU are essential for unfolding of protein substrates subsequently hydrolyzed by HslV. HslU recognizes the N-terminal part of its protein substrates and unfolds these before they are guided to HslV for hydrolysis. The sequence is that of ATP-dependent protease ATPase subunit HslU from Petrotoga mobilis (strain DSM 10674 / SJ95).